The chain runs to 387 residues: 3-ketoacyl-CoA thiolase (387 aa).

C91 serves as the catalytic Acyl-thioester intermediate. Catalysis depends on proton acceptor residues H343 and C373.

This sequence belongs to the thiolase-like superfamily. Thiolase family. As to quaternary structure, heterotetramer of two alpha chains (FadB) and two beta chains (FadA).

It localises to the cytoplasm. The catalysed reaction is an acyl-CoA + acetyl-CoA = a 3-oxoacyl-CoA + CoA. It participates in lipid metabolism; fatty acid beta-oxidation. Its function is as follows. Catalyzes the final step of fatty acid oxidation in which acetyl-CoA is released and the CoA ester of a fatty acid two carbons shorter is formed. The protein is 3-ketoacyl-CoA thiolase of Pectobacterium carotovorum subsp. carotovorum (strain PC1).